The sequence spans 117 residues: MYEFLGILIYFFIALALSLLLLGLPFLVSTRKADPEKISAYECGFDPFDDARGRFDIQFYLVAILFIIFDLEVAFLFPWALTLNKIGYFGFWSMMLFLFILTVGFIYEWRKGALDWS.

3 helical membrane passes run 4–24 (FLGI…LLGL), 61–81 (LVAI…PWAL), and 86–106 (IGYF…VGFI).

The protein belongs to the complex I subunit 3 family.

The protein localises to the mitochondrion membrane. It carries out the reaction a ubiquinone + NADH + 5 H(+)(in) = a ubiquinol + NAD(+) + 4 H(+)(out). Functionally, core subunit of the mitochondrial membrane respiratory chain NADH dehydrogenase (Complex I) that is believed to belong to the minimal assembly required for catalysis. Complex I functions in the transfer of electrons from NADH to the respiratory chain. The immediate electron acceptor for the enzyme is believed to be ubiquinone. This chain is NADH-ubiquinone oxidoreductase chain 3 (NAD3), found in Prototheca wickerhamii.